The chain runs to 544 residues: pH-responsive protein 2 (544 aa).

A signal peptide spans 1–22; it reads MLLKSLFPSILAATSFVSSVAA. N-linked (GlcNAc...) asparagine glycosylation is found at Asn-40 and Asn-59. Cys-72 and Cys-101 are disulfide-bonded. N-linked (GlcNAc...) asparagine glycosylation is present at Asn-147. 5 disulfides stabilise this stretch: Cys-214–Cys-347, Cys-232–Cys-263, Cys-369–Cys-420, Cys-378–Cys-444, and Cys-397–Cys-402. Asn-408 carries an N-linked (GlcNAc...) asparagine glycan. The tract at residues 469-514 is disordered; it reads GSSGLGTVSGTVRTDTSQSTSDSGSGSSSSSSSSSSSSSSGSSGSK. The GPI-anchor amidated serine moiety is linked to residue Ser-515. A propeptide spans 516–544 (removed in mature form); sequence AASIVSVNLLTKIATIGISIVVGFGLITM.

This sequence belongs to the glycosyl hydrolase 72 family.

The protein localises to the cell membrane. Required for apical cell growth and plays an essential role in morphogenesis. May be integral to the pathogenic ability of the organism. The chain is pH-responsive protein 2 (PHR2) from Candida albicans (strain SC5314 / ATCC MYA-2876) (Yeast).